The sequence spans 253 residues: Type III pantothenate kinase (253 aa).

6–13 serves as a coordination point for ATP; that stretch reads DVGNTNTV. 103 to 106 provides a ligand contact to substrate; it reads GADR. Asp-105 acts as the Proton acceptor in catalysis. Asp-125 contacts K(+). Residue Thr-128 participates in ATP binding. Position 180 (Thr-180) interacts with substrate.

This sequence belongs to the type III pantothenate kinase family. Homodimer. It depends on NH4(+) as a cofactor. The cofactor is K(+).

Its subcellular location is the cytoplasm. The catalysed reaction is (R)-pantothenate + ATP = (R)-4'-phosphopantothenate + ADP + H(+). The protein operates within cofactor biosynthesis; coenzyme A biosynthesis; CoA from (R)-pantothenate: step 1/5. Functionally, catalyzes the phosphorylation of pantothenate (Pan), the first step in CoA biosynthesis. The protein is Type III pantothenate kinase of Parafrankia sp. (strain EAN1pec).